Reading from the N-terminus, the 305-residue chain is Homoserine kinase (305 aa).

Residue 93–103 (PLSRGLGSSAT) participates in ATP binding.

The protein belongs to the GHMP kinase family. Homoserine kinase subfamily.

The protein localises to the cytoplasm. The catalysed reaction is L-homoserine + ATP = O-phospho-L-homoserine + ADP + H(+). It functions in the pathway amino-acid biosynthesis; L-threonine biosynthesis; L-threonine from L-aspartate: step 4/5. Its function is as follows. Catalyzes the ATP-dependent phosphorylation of L-homoserine to L-homoserine phosphate. This Picosynechococcus sp. (strain ATCC 27264 / PCC 7002 / PR-6) (Agmenellum quadruplicatum) protein is Homoserine kinase.